We begin with the raw amino-acid sequence, 267 residues long: Phosphatidylserine decarboxylase proenzyme (267 aa).

Catalysis depends on charge relay system; for autoendoproteolytic cleavage activity residues D78, H132, and S236. S236 (schiff-base intermediate with substrate; via pyruvic acid; for decarboxylase activity) is an active-site residue. S236 carries the pyruvic acid (Ser); by autocatalysis modification.

It belongs to the phosphatidylserine decarboxylase family. PSD-B subfamily. Prokaryotic type I sub-subfamily. In terms of assembly, heterodimer of a large membrane-associated beta subunit and a small pyruvoyl-containing alpha subunit. The cofactor is pyruvate. Is synthesized initially as an inactive proenzyme. Formation of the active enzyme involves a self-maturation process in which the active site pyruvoyl group is generated from an internal serine residue via an autocatalytic post-translational modification. Two non-identical subunits are generated from the proenzyme in this reaction, and the pyruvate is formed at the N-terminus of the alpha chain, which is derived from the carboxyl end of the proenzyme. The autoendoproteolytic cleavage occurs by a canonical serine protease mechanism, in which the side chain hydroxyl group of the serine supplies its oxygen atom to form the C-terminus of the beta chain, while the remainder of the serine residue undergoes an oxidative deamination to produce ammonia and the pyruvoyl prosthetic group on the alpha chain. During this reaction, the Ser that is part of the protease active site of the proenzyme becomes the pyruvoyl prosthetic group, which constitutes an essential element of the active site of the mature decarboxylase.

Its subcellular location is the cell membrane. The catalysed reaction is a 1,2-diacyl-sn-glycero-3-phospho-L-serine + H(+) = a 1,2-diacyl-sn-glycero-3-phosphoethanolamine + CO2. The protein operates within phospholipid metabolism; phosphatidylethanolamine biosynthesis; phosphatidylethanolamine from CDP-diacylglycerol: step 2/2. Its function is as follows. Catalyzes the formation of phosphatidylethanolamine (PtdEtn) from phosphatidylserine (PtdSer). The protein is Phosphatidylserine decarboxylase proenzyme of Helicobacter pylori (strain J99 / ATCC 700824) (Campylobacter pylori J99).